We begin with the raw amino-acid sequence, 1167 residues long: Non-toxic nonhemagglutinin (1167 aa).

A light chain nLC region spans residues 1–381 (MDIIDNVDIT…PQQIINLIDN (381 aa)). Positions 382–804 (NNILLIKSYI…LFNSKIQLTI (423 aa)) are N-heavy chain nHN. The interval 805 to 1167 (KNEKPEYNLL…LNDIYSWTLI (363 aa)) is C-heavy chain nHC.

The protein belongs to the botulism non-toxic nonhemagglutinin family.

Expression of the ptox operon (ntnh-orfX1-orfX2-orfX3-pmp1) in B.thuringiensis kills Anopheles but not Aedes mosquito 3rd instar larvae. The ntnh-pmp1 construct is about half as toxic. The protein is Non-toxic nonhemagglutinin of Paraclostridium bifermentans (Clostridium bifermentans).